Here is a 153-residue protein sequence, read N- to C-terminus: MPLLLTGQAFRRDLEANGCLAVQAPLEGGAETRLLRRLRGAGYSTRMTSARGLGDPEVFLTQKHGIRPPHLGHQSVGRGAAVGEVQEVAPQLGDLFESDAPVALWLLEGQVLSRSELLSLCDLCKREPRLRIIVEMGGARSLKWEPMTTYLKA.

It belongs to the complex I NdhN subunit family. NDH-1 can be composed of about 15 different subunits; different subcomplexes with different compositions have been identified which probably have different functions.

The protein localises to the cellular thylakoid membrane. The enzyme catalyses a plastoquinone + NADH + (n+1) H(+)(in) = a plastoquinol + NAD(+) + n H(+)(out). It carries out the reaction a plastoquinone + NADPH + (n+1) H(+)(in) = a plastoquinol + NADP(+) + n H(+)(out). NDH-1 shuttles electrons from an unknown electron donor, via FMN and iron-sulfur (Fe-S) centers, to quinones in the respiratory and/or the photosynthetic chain. The immediate electron acceptor for the enzyme in this species is believed to be plastoquinone. Couples the redox reaction to proton translocation, and thus conserves the redox energy in a proton gradient. Cyanobacterial NDH-1 also plays a role in inorganic carbon-concentration. The protein is NAD(P)H-quinone oxidoreductase subunit N of Synechococcus sp. (strain CC9605).